Here is a 97-residue protein sequence, read N- to C-terminus: Aspartyl/glutamyl-tRNA(Asn/Gln) amidotransferase subunit C (97 aa).

This sequence belongs to the GatC family. Heterotrimer of A, B and C subunits.

It catalyses the reaction L-glutamyl-tRNA(Gln) + L-glutamine + ATP + H2O = L-glutaminyl-tRNA(Gln) + L-glutamate + ADP + phosphate + H(+). It carries out the reaction L-aspartyl-tRNA(Asn) + L-glutamine + ATP + H2O = L-asparaginyl-tRNA(Asn) + L-glutamate + ADP + phosphate + 2 H(+). In terms of biological role, allows the formation of correctly charged Asn-tRNA(Asn) or Gln-tRNA(Gln) through the transamidation of misacylated Asp-tRNA(Asn) or Glu-tRNA(Gln) in organisms which lack either or both of asparaginyl-tRNA or glutaminyl-tRNA synthetases. The reaction takes place in the presence of glutamine and ATP through an activated phospho-Asp-tRNA(Asn) or phospho-Glu-tRNA(Gln). This is Aspartyl/glutamyl-tRNA(Asn/Gln) amidotransferase subunit C from Roseiflexus sp. (strain RS-1).